Reading from the N-terminus, the 377-residue chain is Phosphoserine aminotransferase (377 aa).

An L-glutamate-binding site is contributed by Arg-43. 4 residues coordinate pyridoxal 5'-phosphate: Trp-105, Thr-164, Asp-189, and Gln-212. Lys-213 carries the post-translational modification N6-(pyridoxal phosphate)lysine. 254 to 255 contacts pyridoxal 5'-phosphate; it reads NT.

The protein belongs to the class-V pyridoxal-phosphate-dependent aminotransferase family. SerC subfamily. As to quaternary structure, homodimer. The cofactor is pyridoxal 5'-phosphate.

The protein localises to the cytoplasm. It catalyses the reaction O-phospho-L-serine + 2-oxoglutarate = 3-phosphooxypyruvate + L-glutamate. The enzyme catalyses 4-(phosphooxy)-L-threonine + 2-oxoglutarate = (R)-3-hydroxy-2-oxo-4-phosphooxybutanoate + L-glutamate. Its pathway is amino-acid biosynthesis; L-serine biosynthesis; L-serine from 3-phospho-D-glycerate: step 2/3. It functions in the pathway cofactor biosynthesis; pyridoxine 5'-phosphate biosynthesis; pyridoxine 5'-phosphate from D-erythrose 4-phosphate: step 3/5. In terms of biological role, catalyzes the reversible conversion of 3-phosphohydroxypyruvate to phosphoserine and of 3-hydroxy-2-oxo-4-phosphonooxybutanoate to phosphohydroxythreonine. The chain is Phosphoserine aminotransferase from Bordetella pertussis (strain Tohama I / ATCC BAA-589 / NCTC 13251).